The primary structure comprises 103 residues: Histone H4 (103 aa).

Over residues 1–14 the composition is skewed to gly residues; sequence MSGRGKGGKGLGKG. Residues 1-20 are disordered; sequence MSGRGKGGKGLGKGGAKRHR. S2 bears the N-acetylserine mark. An N6-acetyl-N6-methyllysine; alternate mark is found at K6 and K13. Residues 17 to 21 mediate DNA binding; it reads KRHRK. At K21 the chain carries N6-methyllysine.

This sequence belongs to the histone H4 family. In terms of assembly, the nucleosome is a histone octamer containing two molecules each of H2A, H2B, H3 and H4 assembled in one H3-H4 heterotetramer and two H2A-H2B heterodimers. The octamer wraps approximately 147 bp of DNA.

The protein localises to the nucleus. Its subcellular location is the chromosome. Functionally, core component of nucleosome. Nucleosomes wrap and compact DNA into chromatin, limiting DNA accessibility to the cellular machineries which require DNA as a template. Histones thereby play a central role in transcription regulation, DNA repair, DNA replication and chromosomal stability. DNA accessibility is regulated via a complex set of post-translational modifications of histones, also called histone code, and nucleosome remodeling. This Solaster stimpsoni (Striped sun sea star) protein is Histone H4.